Reading from the N-terminus, the 601-residue chain is uncharacterized protein (601 aa).

The interval 127 to 364 is disordered; it reads SSLFSSGSPP…PAFANDDTVH (238 aa). The span at 128-137 shows a compositional bias: polar residues; that stretch reads SLFSSGSPPD. Low complexity predominate over residues 141–154; that stretch reads RNSTSNLSSVSTNS. Composition is skewed to polar residues over residues 159-177, 199-213, and 232-250; these read TIGS…ASQR, ALSS…NVTP, and SATN…SPSQ. S247 and S281 each carry phosphoserine. Positions 265–281 are enriched in low complexity; the sequence is SLSSSPSSEDSDLSLSS. Composition is skewed to basic and acidic residues over residues 286-296 and 313-325; these read DEKKQPSKSEK and GSKE…KEKA. Phosphoserine is present on S335. Over residues 338 to 356 the composition is skewed to polar residues; it reads DTSTEYDSNSLRRSRSNPA.

This is an uncharacterized protein from Schizosaccharomyces pombe (strain 972 / ATCC 24843) (Fission yeast).